We begin with the raw amino-acid sequence, 115 residues long: Aspartate 1-decarboxylase (115 aa).

S24 acts as the Schiff-base intermediate with substrate; via pyruvic acid in catalysis. S24 is subject to Pyruvic acid (Ser). T56 contributes to the substrate binding site. The active-site Proton donor is Y57. 72–74 (GAA) lines the substrate pocket.

The protein belongs to the PanD family. Heterooctamer of four alpha and four beta subunits. It depends on pyruvate as a cofactor. Post-translationally, is synthesized initially as an inactive proenzyme, which is activated by self-cleavage at a specific serine bond to produce a beta-subunit with a hydroxyl group at its C-terminus and an alpha-subunit with a pyruvoyl group at its N-terminus.

Its subcellular location is the cytoplasm. It catalyses the reaction L-aspartate + H(+) = beta-alanine + CO2. It participates in cofactor biosynthesis; (R)-pantothenate biosynthesis; beta-alanine from L-aspartate: step 1/1. Functionally, catalyzes the pyruvoyl-dependent decarboxylation of aspartate to produce beta-alanine. The protein is Aspartate 1-decarboxylase of Pseudothermotoga lettingae (strain ATCC BAA-301 / DSM 14385 / NBRC 107922 / TMO) (Thermotoga lettingae).